A 290-amino-acid polypeptide reads, in one-letter code: Acetyl-coenzyme A carboxylase carboxyl transferase subunit beta (290 aa).

The CoA carboxyltransferase N-terminal domain maps to 28–290 (LMNKCSKCGT…TVREGLSHGG (263 aa)). Zn(2+)-binding residues include Cys32, Cys35, Cys51, and Cys54. A C4-type zinc finger spans residues 32–54 (CSKCGTIQYSKELDKNLKVCSSC).

This sequence belongs to the AccD/PCCB family. Acetyl-CoA carboxylase is a heterohexamer composed of biotin carboxyl carrier protein (AccB), biotin carboxylase (AccC) and two subunits each of ACCase subunit alpha (AccA) and ACCase subunit beta (AccD). Zn(2+) serves as cofactor.

The protein localises to the cytoplasm. It carries out the reaction N(6)-carboxybiotinyl-L-lysyl-[protein] + acetyl-CoA = N(6)-biotinyl-L-lysyl-[protein] + malonyl-CoA. The protein operates within lipid metabolism; malonyl-CoA biosynthesis; malonyl-CoA from acetyl-CoA: step 1/1. In terms of biological role, component of the acetyl coenzyme A carboxylase (ACC) complex. Biotin carboxylase (BC) catalyzes the carboxylation of biotin on its carrier protein (BCCP) and then the CO(2) group is transferred by the transcarboxylase to acetyl-CoA to form malonyl-CoA. The polypeptide is Acetyl-coenzyme A carboxylase carboxyl transferase subunit beta (Paenibacillus sp. (strain JDR-2)).